The following is a 264-amino-acid chain: 4-oxalocrotonate decarboxylase (264 aa).

Belongs to the hydratase/decarboxylase family.

It carries out the reaction (3E)-2-oxohex-3-enedioate + H(+) = 2-oxopent-4-enoate + CO2. It functions in the pathway aromatic compound metabolism; benzoate degradation via hydroxylation. This is 4-oxalocrotonate decarboxylase (dmpH) from Pseudomonas sp. (strain CF600).